Reading from the N-terminus, the 584-residue chain is Proteasome-associated ATPase (584 aa).

Positions 16 to 91 (EELASQVRLL…KEEVDRLAQP (76 aa)) form a coiled coil. ATP is bound at residue 273–278 (GCGKTL). The interval 583–584 (YL) is docks into pockets in the proteasome alpha-ring.

It belongs to the AAA ATPase family. In terms of assembly, homohexamer. Assembles into a hexameric ring structure that caps the 20S proteasome core. Strongly interacts with the prokaryotic ubiquitin-like protein Pup through a hydrophobic interface; the interacting region of ARC lies in its N-terminal coiled-coil domain. There is one Pup binding site per ARC hexamer ring. Upon ATP-binding, the C-terminus of ARC interacts with the alpha-rings of the proteasome core, possibly by binding to the intersubunit pockets.

The protein operates within protein degradation; proteasomal Pup-dependent pathway. Its function is as follows. ATPase which is responsible for recognizing, binding, unfolding and translocation of pupylated proteins into the bacterial 20S proteasome core particle. May be essential for opening the gate of the 20S proteasome via an interaction with its C-terminus, thereby allowing substrate entry and access to the site of proteolysis. Thus, the C-termini of the proteasomal ATPase may function like a 'key in a lock' to induce gate opening and therefore regulate proteolysis. The polypeptide is Proteasome-associated ATPase (Nocardioides sp. (strain ATCC BAA-499 / JS614)).